Reading from the N-terminus, the 144-residue chain is uncharacterized protein (144 aa).

Residues 23 to 82 (EELYKKLENNLRKIETSYLDSKHCQDFKRKIEYYKIVPLISETKEIIKVLIQKIETLEIK) adopt a coiled-coil conformation.

This is an uncharacterized protein from Acanthamoeba polyphaga mimivirus (APMV).